Reading from the N-terminus, the 556-residue chain is MQFDYIIIGAGSAGNVLATRLTEDPNTSVLLLEAGGPDYRFDFRTQMPAALAFPLQGKRYNWAYETEPEPFMNNRRMECGRGKGLGGSSLINGMCYIRGNALDLDNWAQEPGLENWSYLDCLPYYRKAETRDVGENDYHGGDGPVSVTTSKPGVNPLFEAMIEAGVQAGYPRTDDLNGYQQEGFGPMDRTVTPQGRRASTARGYLDQAKSRPNLTIRTHAMTDHIIFDGKRAVGVEWLEGDSTIPTRATANKEVLLCAGAIASPQILQRSGVGNAELLAEFDIPLVHELPGVGENLQDHLEMYLQYECKEPVSLYPALQWWNQPKIGAEWLFGGTGVGASNHFEAGGFIRSREEFAWPNIQYHFLPVAINYNGSNAVKEHGFQCHVGSMRSPSRGHVRIKSRDPHQHPAILFNYMSHEQDWQEFRDAIRITREIMHQPALDQYRGREISPGTECQTDEQLDEFVRNHAETAFHPCGTCKMGYDEMSVVDGEGRVHGLEGLRVVDASIMPQIITGNLNATTIMIGEKIADMIRGQEALPRSTAGYFVANGMPVRAKK.

FAD is bound at residue 4-33; sequence DYIIIGAGSAGNVLATRLTEDPNTSVLLLE. Catalysis depends on histidine 473, which acts as the Proton acceptor.

Belongs to the GMC oxidoreductase family. FAD is required as a cofactor.

It carries out the reaction choline + A = betaine aldehyde + AH2. The catalysed reaction is betaine aldehyde + NAD(+) + H2O = glycine betaine + NADH + 2 H(+). It participates in amine and polyamine biosynthesis; betaine biosynthesis via choline pathway; betaine aldehyde from choline (cytochrome c reductase route): step 1/1. Functionally, involved in the biosynthesis of the osmoprotectant glycine betaine. Catalyzes the oxidation of choline to betaine aldehyde and betaine aldehyde to glycine betaine at the same rate. The polypeptide is Oxygen-dependent choline dehydrogenase (Escherichia coli O139:H28 (strain E24377A / ETEC)).